A 176-amino-acid polypeptide reads, in one-letter code: uncharacterized protein (176 aa).

Belongs to the mimivirus R160 family.

This is an uncharacterized protein from Acanthamoeba polyphaga mimivirus (APMV).